We begin with the raw amino-acid sequence, 361 residues long: Chorismate synthase (361 aa).

NADP(+)-binding residues include Arg48 and Arg54. FMN contacts are provided by residues 125-127 (RSS), 238-239 (NA), Gly278, 293-297 (KPTSS), and Arg319.

Belongs to the chorismate synthase family. As to quaternary structure, homotetramer. The cofactor is FMNH2.

It carries out the reaction 5-O-(1-carboxyvinyl)-3-phosphoshikimate = chorismate + phosphate. It participates in metabolic intermediate biosynthesis; chorismate biosynthesis; chorismate from D-erythrose 4-phosphate and phosphoenolpyruvate: step 7/7. Catalyzes the anti-1,4-elimination of the C-3 phosphate and the C-6 proR hydrogen from 5-enolpyruvylshikimate-3-phosphate (EPSP) to yield chorismate, which is the branch point compound that serves as the starting substrate for the three terminal pathways of aromatic amino acid biosynthesis. This reaction introduces a second double bond into the aromatic ring system. The chain is Chorismate synthase from Pectobacterium atrosepticum (strain SCRI 1043 / ATCC BAA-672) (Erwinia carotovora subsp. atroseptica).